The following is a 520-amino-acid chain: GMP synthase [glutamine-hydrolyzing] (520 aa).

The Glutamine amidotransferase type-1 domain occupies 13–205; that stretch reads KIIVLDYGSQ…ALNICKAKGD (193 aa). The active-site Nucleophile is the Cys90. Active-site residues include His179 and Glu181. The GMPS ATP-PPase domain maps to 206-395; sequence WSMDNFIDMQ…LGMPDHIVWR (190 aa). 233-239 contributes to the ATP binding site; sequence SGGVDSS.

As to quaternary structure, homodimer.

It catalyses the reaction XMP + L-glutamine + ATP + H2O = GMP + L-glutamate + AMP + diphosphate + 2 H(+). It functions in the pathway purine metabolism; GMP biosynthesis; GMP from XMP (L-Gln route): step 1/1. Its function is as follows. Catalyzes the synthesis of GMP from XMP. The sequence is that of GMP synthase [glutamine-hydrolyzing] from Streptococcus pneumoniae (strain P1031).